The primary structure comprises 229 residues: Wtf element wtf14 (229 aa).

The span at 1–26 (MENNHHLAKDSLDELNPKRGKGEHET) shows a compositional bias: basic and acidic residues. The segment at 1 to 27 (MENNHHLAKDSLDELNPKRGKGEHETQ) is disordered. 4 helical membrane-spanning segments follow: residues 71 to 91 (IPAV…YLVF), 100 to 120 (VLFG…LLAT), 151 to 171 (LYAI…LMFF), and 188 to 208 (VIGV…PGLF).

This sequence belongs to the WTF family.

The protein localises to the endoplasmic reticulum membrane. May act in meiotic drive. The sequence is that of Wtf element wtf14 from Schizosaccharomyces pombe (strain 972 / ATCC 24843) (Fission yeast).